Consider the following 378-residue polypeptide: Mas-related G-protein coupled receptor MRG (378 aa).

Topologically, residues 1-77 are extracellular; sequence MVWGKICWFS…VGQQALPLNI (77 aa). Residues N54 and N57 are each glycosylated (N-linked (GlcNAc...) asparagine). A helical transmembrane segment spans residues 78–101; the sequence is IAPKAVLVSLCGVLLNGTVFWLLC. Residues 102–109 are Cytoplasmic-facing; the sequence is CGATNPYM. Residues 110 to 136 traverse the membrane as a helical segment; it reads VYILHLVAADVIYLCCSAVGFLQVTLL. The Extracellular portion of the chain corresponds to 137–154; the sequence is TYHGVVFFIPDFLAILSP. A helical transmembrane segment spans residues 155-169; sequence FSFEVCLCLLVAIST. Residues 170 to 191 are Cytoplasmic-facing; it reads ERCVCVLFPIWYRCHRPKYTSN. A helical membrane pass occupies residues 192-207; that stretch reads VVCTLIWGLPFCINIV. Residues 208–221 lie on the Extracellular side of the membrane; that stretch reads KSLFLTYWKHVKAC. The chain crosses the membrane as a helical span at residues 222–248; it reads VIFLKLSGLFHAILSLVMCVSSLTLLI. The Cytoplasmic segment spans residues 249–264; the sequence is RFLCCSQQQKATRVYA. The chain crosses the membrane as a helical span at residues 265–286; that stretch reads VVQISAPMFLLWALPLSVAPLI. The Extracellular segment spans residues 287–297; that stretch reads TDFKMFVTTSY. The chain crosses the membrane as a helical span at residues 298–317; that stretch reads LISLFLIINSSANPIIYFFV. Over 318-378 the chain is Cytoplasmic; the sequence is GSLRKKRLKE…PREHRVDVET (61 aa). The segment at 344–378 is disordered; sequence GRNKKAAGIDPMEQPHSTQHVENLLPREHRVDVET. Basic and acidic residues predominate over residues 368 to 378; it reads LPREHRVDVET.

This sequence belongs to the G-protein coupled receptor 1 family. Mas subfamily.

Its subcellular location is the cell membrane. This chain is Mas-related G-protein coupled receptor MRG (MAS1L), found in Homo sapiens (Human).